Here is a 314-residue protein sequence, read N- to C-terminus: Methionyl-tRNA formyltransferase (314 aa).

Position 108–111 (108–111 (SLLP)) interacts with (6S)-5,6,7,8-tetrahydrofolate.

Belongs to the Fmt family.

The catalysed reaction is L-methionyl-tRNA(fMet) + (6R)-10-formyltetrahydrofolate = N-formyl-L-methionyl-tRNA(fMet) + (6S)-5,6,7,8-tetrahydrofolate + H(+). Functionally, attaches a formyl group to the free amino group of methionyl-tRNA(fMet). The formyl group appears to play a dual role in the initiator identity of N-formylmethionyl-tRNA by promoting its recognition by IF2 and preventing the misappropriation of this tRNA by the elongation apparatus. The protein is Methionyl-tRNA formyltransferase of Akkermansia muciniphila (strain ATCC BAA-835 / DSM 22959 / JCM 33894 / BCRC 81048 / CCUG 64013 / CIP 107961 / Muc).